A 342-amino-acid chain; its full sequence is Uroporphyrinogen decarboxylase (342 aa).

Substrate contacts are provided by residues 24-28 (RQAGR), Asp74, Tyr151, Ser206, and His322.

The protein belongs to the uroporphyrinogen decarboxylase family. Homodimer.

Its subcellular location is the cytoplasm. The enzyme catalyses uroporphyrinogen III + 4 H(+) = coproporphyrinogen III + 4 CO2. Its pathway is porphyrin-containing compound metabolism; protoporphyrin-IX biosynthesis; coproporphyrinogen-III from 5-aminolevulinate: step 4/4. Catalyzes the decarboxylation of four acetate groups of uroporphyrinogen-III to yield coproporphyrinogen-III. This chain is Uroporphyrinogen decarboxylase, found in Paracoccus denitrificans (strain Pd 1222).